The sequence spans 575 residues: Alpha-(1,6)-fucosyltransferase (575 aa).

The Cytoplasmic segment spans residues 1-9; sequence MRAWTGSWR. The helical; Signal-anchor for type II membrane protein transmembrane segment at 10 to 30 threads the bilayer; that stretch reads WIMLILFAWGTLLFYIGGHLV. The Lumenal portion of the chain corresponds to 31–575; the sequence is RDNDHPDHSS…KYPTYPEAEK (545 aa). 3 cysteine pairs are disulfide-bonded: Cys-204-Cys-266, Cys-212-Cys-230, and Cys-218-Cys-222. Residues 206 to 493 enclose the GT23 domain; that stretch reads KARKLVCNIN…PDASANFHSL (288 aa). The residue at position 278 (Ser-278) is a Phosphoserine. The SH3-binding motif lies at 299–305; the sequence is PRPPYLP. The tract at residues 365 to 366 is important for donor substrate binding; that stretch reads RR. A disulfide bridge links Cys-465 with Cys-472. Positions 502–563 constitute an SH3 domain; the sequence is QNAHNQIAVY…PSYKVREKIE (62 aa).

The protein belongs to the glycosyltransferase 23 family. In terms of processing, tyrosine phosphorylated by PKDCC/VLK.

Its subcellular location is the golgi apparatus. The protein localises to the golgi stack membrane. The catalysed reaction is N(4)-{beta-D-GlcNAc-(1-&gt;2)-alpha-D-Man-(1-&gt;3)-[beta-D-GlcNAc-(1-&gt;2)-alpha-D-Man-(1-&gt;6)]-beta-D-Man-(1-&gt;4)-beta-D-GlcNAc-(1-&gt;4)-beta-D-GlcNAc}-L-asparaginyl-[protein] + GDP-beta-L-fucose = an N(4)-{beta-D-GlcNAc-(1-&gt;2)-alpha-D-Man-(1-&gt;3)-[beta-D-GlcNAc-(1-&gt;2)-alpha-D-Man-(1-&gt;6)]-beta-D-Man-(1-&gt;4)-beta-D-GlcNAc-(1-&gt;4)-[alpha-L-Fuc-(1-&gt;6)]-beta-D-GlcNAc}-L-asparaginyl-[protein] + GDP + H(+). It participates in protein modification; protein glycosylation. In terms of biological role, catalyzes the addition of fucose in alpha 1-6 linkage to the first GlcNAc residue, next to the peptide chains in N-glycans. The polypeptide is Alpha-(1,6)-fucosyltransferase (Fut8) (Mus musculus (Mouse)).